A 313-amino-acid chain; its full sequence is Acetaldehyde dehydrogenase 3 (313 aa).

NAD(+) is bound at residue 11 to 14 (SGNI). Cys129 acts as the Acyl-thioester intermediate in catalysis. NAD(+) is bound by residues 160-168 (SAGPGTRAN) and Asn288.

This sequence belongs to the acetaldehyde dehydrogenase family.

The enzyme catalyses acetaldehyde + NAD(+) + CoA = acetyl-CoA + NADH + H(+). The polypeptide is Acetaldehyde dehydrogenase 3 (Rhizorhabdus wittichii (strain DSM 6014 / CCUG 31198 / JCM 15750 / NBRC 105917 / EY 4224 / RW1) (Sphingomonas wittichii)).